The sequence spans 103 residues: Small ribosomal subunit protein uS10 (103 aa).

The protein belongs to the universal ribosomal protein uS10 family. As to quaternary structure, part of the 30S ribosomal subunit.

In terms of biological role, involved in the binding of tRNA to the ribosomes. In Shewanella baltica (strain OS223), this protein is Small ribosomal subunit protein uS10.